We begin with the raw amino-acid sequence, 117 residues long: Photosystem II reaction center Psb28 protein (117 aa).

This sequence belongs to the Psb28 family. As to quaternary structure, part of the photosystem II complex.

It localises to the cellular thylakoid membrane. The sequence is that of Photosystem II reaction center Psb28 protein from Prochlorococcus marinus (strain MIT 9215).